We begin with the raw amino-acid sequence, 170 residues long: Urease accessory protein UreE (170 aa).

This sequence belongs to the UreE family.

It is found in the cytoplasm. Involved in urease metallocenter assembly. Binds nickel. Probably functions as a nickel donor during metallocenter assembly. This is Urease accessory protein UreE from Helicobacter acinonychis (strain Sheeba).